The chain runs to 256 residues: Lysine-rich coiled-coil protein 1 (256 aa).

Disordered stretches follow at residues 61 to 83 (QRIPSGTNHSYPRSCSSSQTEDR) and 141 to 256 (GHST…ILGF). 2 stretches are compositionally biased toward polar residues: residues 64–79 (PSGTNHSYPRSCSSSQ) and 141–153 (GHSTIDPQVSHRQ). Basic and acidic residues-rich tracts occupy residues 161–188 (HLEEGRERQEERPKHERKRSSEEMDLNK) and 218–227 (KNRDVSSKKE). A coiled-coil region spans residues 208–247 (TEKLKNRKEKKNRDVSSKKEDRKRRKEKKEQGEERTEEEM).

This chain is Lysine-rich coiled-coil protein 1 (Krcc1), found in Rattus norvegicus (Rat).